A 167-amino-acid polypeptide reads, in one-letter code: Transcriptional regulator MraZ (167 aa).

SpoVT-AbrB domains follow at residues 8–51 (ESNH…YGDH) and 92–135 (SFPT…NPAT).

The protein belongs to the MraZ family. As to quaternary structure, forms oligomers.

The protein localises to the cytoplasm. It localises to the nucleoid. The chain is Transcriptional regulator MraZ from Ruegeria pomeroyi (strain ATCC 700808 / DSM 15171 / DSS-3) (Silicibacter pomeroyi).